Here is a 440-residue protein sequence, read N- to C-terminus: Proline--tRNA ligase (440 aa).

It belongs to the class-II aminoacyl-tRNA synthetase family. ProS type 2 subfamily. In terms of assembly, homodimer.

The protein localises to the cytoplasm. The catalysed reaction is tRNA(Pro) + L-proline + ATP = L-prolyl-tRNA(Pro) + AMP + diphosphate. Functionally, catalyzes the attachment of proline to tRNA(Pro) in a two-step reaction: proline is first activated by ATP to form Pro-AMP and then transferred to the acceptor end of tRNA(Pro). This is Proline--tRNA ligase from Rhizobium johnstonii (strain DSM 114642 / LMG 32736 / 3841) (Rhizobium leguminosarum bv. viciae).